We begin with the raw amino-acid sequence, 453 residues long: Pup--protein ligase (453 aa).

Glutamate 9 serves as a coordination point for Mg(2+). Arginine 53 is an ATP binding site. Tyrosine 55 contributes to the Mg(2+) binding site. Aspartate 57 (proton acceptor) is an active-site residue. Residue glutamate 63 participates in Mg(2+) binding. Threonine 66 and tryptophan 420 together coordinate ATP.

Belongs to the Pup ligase/Pup deamidase family. Pup-conjugating enzyme subfamily.

It catalyses the reaction ATP + [prokaryotic ubiquitin-like protein]-L-glutamate + [protein]-L-lysine = ADP + phosphate + N(6)-([prokaryotic ubiquitin-like protein]-gamma-L-glutamyl)-[protein]-L-lysine.. It participates in protein degradation; proteasomal Pup-dependent pathway. It functions in the pathway protein modification; protein pupylation. In terms of biological role, catalyzes the covalent attachment of the prokaryotic ubiquitin-like protein modifier Pup to the proteasomal substrate proteins, thereby targeting them for proteasomal degradation. This tagging system is termed pupylation. The ligation reaction involves the side-chain carboxylate of the C-terminal glutamate of Pup and the side-chain amino group of a substrate lysine. The sequence is that of Pup--protein ligase from Streptomyces griseus subsp. griseus (strain JCM 4626 / CBS 651.72 / NBRC 13350 / KCC S-0626 / ISP 5235).